A 121-amino-acid polypeptide reads, in one-letter code: Protein ripply2.1 (121 aa).

A disordered region spans residues 1-69 (MEPNQQRSCG…DKGKPPSFQH (69 aa)). A WRPW motif motif is present at residues 29-32 (WRPW). Positions 39-57 (HVQNPPTAQQQFYSDNQSH) are enriched in polar residues. The interval 69-104 (HPVKLFWPKSRCYDFMYQEAEELLRHFPVQATISLY) is ripply homology domain.

The protein belongs to the ripply family. As to expression, expressed in the presomitic mesoderm (PSM) in the anterior halves of somitomeres S-0, S-I and S-II and in the newly formed somites.

It localises to the nucleus. Functionally, required during somitogenesis to regulate somite differentiation and the positioning of the presomitic mesoderm-front. Represses the expression of genes involved in somite segmentation by acting with the corepressor tle4 to down-regulate the transcriptional activity of tbx6. Also regulates retinoic acid signaling during somitogenesis and is necessary for the expression of aldh1a2/raldh2. The polypeptide is Protein ripply2.1 (ripply2.1) (Xenopus laevis (African clawed frog)).